Here is a 1073-residue protein sequence, read N- to C-terminus: Guanylyl cyclase C (1073 aa).

The signal sequence occupies residues 1 to 23 (MKTPLLALALWSLLLQLGLTFWP). The Extracellular portion of the chain corresponds to 24–433 (SSVSQNCHNG…IPGRGPQILM (410 aa)). Asparagine 32, asparagine 43, asparagine 79, asparagine 195, asparagine 284, asparagine 307, and asparagine 402 each carry an N-linked (GlcNAc...) asparagine glycan. The chain crosses the membrane as a helical span at residues 434 to 454 (IAVFTLTGTIVLLLLIALLVL). The Cytoplasmic portion of the chain corresponds to 455–1073 (RKYKREYALR…NTTDNESTHF (619 aa)). The region spanning 489-749 (LKIDDDRRRD…KIENTLAKIF (261 aa)) is the Protein kinase domain. Positions 824-954 (TIYFSDIVGF…DTVNTASRME (131 aa)) constitute a Guanylate cyclase domain.

Belongs to the adenylyl cyclase class-4/guanylyl cyclase family. As to quaternary structure, homotrimer. Interacts via its C-terminal region with NHERF4. Interacts with the lectin chaperone VIP36. Glycosylation at Asn-79 is required for interaction with VIP36 while glycosylation at Asn-402 modulates ligand-mediated GC-C activation.

It localises to the cell membrane. Its subcellular location is the endoplasmic reticulum membrane. It carries out the reaction GTP = 3',5'-cyclic GMP + diphosphate. In terms of biological role, guanylyl cyclase that catalyzes synthesis of cyclic GMP (cGMP) from GTP. The sequence is that of Guanylyl cyclase C (GUCY2C) from Sus scrofa (Pig).